The chain runs to 288 residues: NAD kinase (288 aa).

The active-site Proton acceptor is the Asp-73. NAD(+) contacts are provided by residues 73-74 (DG), Arg-78, 144-145 (NE), Asp-174, 185-190 (TAYSLS), and Ala-209.

Belongs to the NAD kinase family. The cofactor is a divalent metal cation.

It is found in the cytoplasm. The catalysed reaction is NAD(+) + ATP = ADP + NADP(+) + H(+). In terms of biological role, involved in the regulation of the intracellular balance of NAD and NADP, and is a key enzyme in the biosynthesis of NADP. Catalyzes specifically the phosphorylation on 2'-hydroxyl of the adenosine moiety of NAD to yield NADP. This is NAD kinase from Porphyromonas gingivalis (strain ATCC BAA-308 / W83).